Consider the following 402-residue polypeptide: L-threonine ammonia-lyase (402 aa).

Residue K51 is modified to N6-(pyridoxal phosphate)lysine. Pyridoxal 5'-phosphate contacts are provided by residues N78, 178-181, and S302; that span reads GGGL. An ACT domain is found at 327–402; the sequence is KLKVELDDLP…GVGYLVDVLK (76 aa).

Belongs to the serine/threonine dehydratase family. Pyridoxal 5'-phosphate is required as a cofactor.

It catalyses the reaction L-threonine = 2-oxobutanoate + NH4(+). The catalysed reaction is L-serine = pyruvate + NH4(+). The protein operates within amino-acid biosynthesis; L-isoleucine biosynthesis; 2-oxobutanoate from L-threonine: step 1/1. Catalyzes the conversion of threonine to 2-oxobutanoate and ammonia. Functions in the threonine-dependent pathway of isoleucine biosynthesis, which is the minor pathway for isoleucine biosynthesis in G.sulfurreducens. Also displays serine ammonia-lyase activity, yielding pyruvate from L-serine. In Geobacter sulfurreducens (strain ATCC 51573 / DSM 12127 / PCA), this protein is L-threonine ammonia-lyase.